The chain runs to 305 residues: Dermonecrotic toxin LiSicTox-alphaIA2aiii (305 aa).

The signal sequence occupies residues 1 to 17 (LPYIALILVCWSVLSQA). Positions 18–25 (AQTDVEER) are excised as a propeptide. Residue histidine 37 is part of the active site. Mg(2+)-binding residues include glutamate 57 and aspartate 59. Residue histidine 73 is the Nucleophile of the active site. 2 disulfides stabilise this stretch: cysteine 77–cysteine 83 and cysteine 79–cysteine 222. Residue aspartate 117 coordinates Mg(2+). Residue asparagine 282 is glycosylated (N-linked (GlcNAc...) asparagine).

The protein belongs to the arthropod phospholipase D family. Class II subfamily. The cofactor is Mg(2+). Expressed by the venom gland.

It localises to the secreted. The catalysed reaction is an N-(acyl)-sphingosylphosphocholine = an N-(acyl)-sphingosyl-1,3-cyclic phosphate + choline. The enzyme catalyses an N-(acyl)-sphingosylphosphoethanolamine = an N-(acyl)-sphingosyl-1,3-cyclic phosphate + ethanolamine. It catalyses the reaction a 1-acyl-sn-glycero-3-phosphocholine = a 1-acyl-sn-glycero-2,3-cyclic phosphate + choline. It carries out the reaction a 1-acyl-sn-glycero-3-phosphoethanolamine = a 1-acyl-sn-glycero-2,3-cyclic phosphate + ethanolamine. Its function is as follows. Dermonecrotic toxins cleave the phosphodiester linkage between the phosphate and headgroup of certain phospholipids (sphingolipid and lysolipid substrates), forming an alcohol (often choline) and a cyclic phosphate. This toxin acts on sphingomyelin (SM). It may also act on ceramide phosphoethanolamine (CPE), lysophosphatidylcholine (LPC) and lysophosphatidylethanolamine (LPE), but not on lysophosphatidylserine (LPS), and lysophosphatidylglycerol (LPG). It acts by transphosphatidylation, releasing exclusively cyclic phosphate products as second products. Induces dermonecrosis, hemolysis, increased vascular permeability, edema, inflammatory response, and platelet aggregation. In Loxosceles intermedia (Brown spider), this protein is Dermonecrotic toxin LiSicTox-alphaIA2aiii.